A 927-amino-acid chain; its full sequence is MMTTTMDYNSSDQGFSWSEIALLGSVETMLEKVYGKHNHHPPIKVETRRRLSSISEELALETLRKVLNMPNVKTLDGIIIYFLNDAVTVDGSPRLWSGESPVQFPRTPGKKSCRASQAEVSLDREDPSPKFLRGDENGESKHISLLLALGELEFKKAFLLLTYLGGKSLGEVISGDEIRQWKDLPMVAYERAVWFKLGQNEERMQLESDSGKTHYYQCHVAPDGSYRLKGYFLENTGTHLHKVLGDDNVLTVRFDQLPKESTYCDNPYSKYKEIAKNGIMVGLRRYQFFVFKDGGKAEKKKRNSTKQVKCYFIRTGSTASSDMENPYILSGMSIHEARMHFMHVHTLPSPANYMARFSLILSKTKKLEVDMTEITVMQIDDIHCHDQSNNDVLDKNGKPRIHSDGTGYISEDLARMCPLNIFKGKSMRSNNIQGTCVQEPPLLIQIRMFNDGSAVKGIFLLNKNLPPQTVQVRPSMIKVYKDKNLSNFSTFNSLEVVTTSNPPKRAKLSKNLVALLSYGGVPNDFFLDILLNTLEKKKTIFFKVRAAGKAALHYGNMDDKNALQMIMAGIPLDEPYLKHYLSKLLKLEKDDLKAGKLPIDESYYLMGTVDPTGELKEDEVSGLAKSQDVLVYRNPGLHFGDIHILKATYVKSLEQYVGNSKYGVFFPQKGPRSLGDEIAGGDFDGDMYFISRNPKLLEHYKPSEPWVSSSPRSKIYTGRQPSELSPEQLEEELFKIFLKTGFSPSSVIGQAADSWLAIMDRFLTLGDENVKEKAEMKKKMLKLTDIYYDAIDAPKTGTEVNLPLDVKVDLFPHYMERNKTFKSTSILGLIFDTVDFHNAEDTTPSGISKLQCFEDEPVSEFDMEKCKLWHKDYRKEMCQAMNSDDDDSCNEVIQKYKQEFYSAAGFKESKKILEELYPKALALYNVT.

The segment at 98–135 (GESPVQFPRTPGKKSCRASQAEVSLDREDPSPKFLRGD) is disordered. Residues 121 to 135 (SLDREDPSPKFLRGD) are compositionally biased toward basic and acidic residues.

Belongs to the RdRP family.

The catalysed reaction is RNA(n) + a ribonucleoside 5'-triphosphate = RNA(n+1) + diphosphate. Probably involved in the RNA silencing pathway and required for the generation of small interfering RNAs (siRNAs). This is Probable RNA-dependent RNA polymerase 4 (RDR4) from Arabidopsis thaliana (Mouse-ear cress).